The primary structure comprises 550 residues: Leucine-rich repeat LGI family member 2 (550 aa).

Residues 1-25 (MALWRGGGALGLLLLSAACLIPPSA) form the signal peptide. Residues 26-62 (QVRRLARCPATCSCTKESIICVGSSWVPRIVPGDISS) enclose the LRRNT domain. A glycan (N-linked (GlcNAc...) asparagine) is linked at Asn67. LRR repeat units follow at residues 83-104 (SLQLLLLNSNSFTVIRDDAFAG) and 107-128 (HLEYLFIEGNKIETISRNAFRG). The region spanning 140–190 (NKFECDCKAKWLYLWLKMTNSTVSDVLCIGPPEYQEKKLNEVTSFDYECTT) is the LRRCT domain. A glycan (N-linked (GlcNAc...) asparagine) is linked at Asn159. EAR repeat units lie at residues 224–266 (DFVV…EWDH), 270–312 (NFRS…KYDE), 316–363 (KFVK…KWNS), 365–408 (GFYS…QWNK), 412–455 (KFVP…RWNS), 457–499 (QFVE…QWDK), and 503–545 (QFKK…EHII). The N-linked (GlcNAc...) asparagine glycan is linked to Asn276. N-linked (GlcNAc...) asparagine glycosylation is present at Asn407.

As to expression, brain.

The protein resides in the secreted. Functionally, required for the development of soma-targeting inhibitory GABAergic synapses made by parvalbumin-positive basket cells. In Mus musculus (Mouse), this protein is Leucine-rich repeat LGI family member 2 (Lgi2).